A 249-amino-acid polypeptide reads, in one-letter code: Pyridoxamine 5'-phosphate oxidase family protein ustO (249 aa).

21-24 provides a ligand contact to substrate; sequence LFFV. Residues 76–81, 91–92, R105, and 163–164 each bind FMN; these read ATVMFC and RL. 215 to 217 is a binding site for substrate; sequence ASY. Residues 227–247 form a helical membrane-spanning segment; sequence TGMALMFLVMVVAQWVGYVLY.

Belongs to the pyridoxamine 5'-phosphate oxidase family. It depends on FMN as a cofactor.

It is found in the membrane. The protein operates within mycotoxin biosynthesis. Functionally, pyridoxamine 5'-phosphate oxidase family protein; part of the gene cluster that mediates the biosynthesis of the secondary metabolite ustiloxin B, an antimitotic tetrapeptide. First, ustA is processed by the subtilisin-like endoprotease Kex2 that is outside the ustiloxin B gene cluster, at the C-terminal side of Arg-Lys, after transfer to Golgi apparatus through the endoplasmic reticulum (ER). Cleavage by KEX2 generates 16 peptides YAIG-I to YAIG-XVI. To process the precursor peptide further, at least two peptidases are necessary to cleave the N-terminal and C-terminal sides of the Tyr-Ala-Ile-Gly core peptide which serves as backbone for the synthesis of ustiloxin B, through cyclization and modification of the tyrosine with a non-protein coding amino acid, norvaline. One of the two peptidases must be the serine peptidase ustP; and the other pepdidase is probably ustH. Macrocyclization of the core peptide derived from ustA requires the tyrosinase ustQ, as well as the homologous oxidases ustYa and ustYb, and leads to the production of the first cyclization product N-desmethylustiloxin F. For the formation of N-desmethylustiloxin F, three oxidation steps are required, hydroxylation at the benzylic position, hydroxylation at either the aromatic ring of Tyr or beta-position of Ile, and oxidative cyclization. UstQ may catalyze the oxidation of a phenol moiety, whereas the ustYa and ustYb are most likely responsible for the remaining two-step oxidations. N-desmethylustiloxin F is then methylated by ustM to yield ustiloxin F which in turn substrate of the cytochrome P450 monooxygenase ustC which catalyzes the formation of S-deoxyustiloxin H. The flavoprotein monooxygenases ustF1 and ustF2 then participate in the modification of the side chain of S-deoxyustiloxin H, leading to the synthesis of an oxime intermediate, via ustiloxin H. Finally, carboxylative dehydration performed by the cysteine desulfurase-like protein ustD yields ustiloxin B. This Aspergillus flavus (strain ATCC 200026 / FGSC A1120 / IAM 13836 / NRRL 3357 / JCM 12722 / SRRC 167) protein is Pyridoxamine 5'-phosphate oxidase family protein ustO.